Consider the following 147-residue polypeptide: Acireductone dioxygenase (147 aa).

Fe(2+) contacts are provided by H74, H76, E80, and H119. Residues H74, H76, E80, and H119 each contribute to the Ni(2+) site.

The protein belongs to the acireductone dioxygenase (ARD) family. The cofactor is Fe(2+). Requires Ni(2+) as cofactor.

The protein localises to the cytoplasm. The protein resides in the nucleus. The enzyme catalyses 1,2-dihydroxy-5-(methylsulfanyl)pent-1-en-3-one + O2 = 4-methylsulfanyl-2-oxobutanoate + formate + 2 H(+). It carries out the reaction 1,2-dihydroxy-5-(methylsulfanyl)pent-1-en-3-one + O2 = 3-(methylsulfanyl)propanoate + CO + formate + 2 H(+). It participates in amino-acid biosynthesis; L-methionine biosynthesis via salvage pathway; L-methionine from S-methyl-5-thio-alpha-D-ribose 1-phosphate: step 5/6. Functionally, catalyzes 2 different reactions between oxygen and the acireductone 1,2-dihydroxy-3-keto-5-methylthiopentene (DHK-MTPene) depending upon the metal bound in the active site. Fe-containing acireductone dioxygenase (Fe-ARD) produces formate and 2-keto-4-methylthiobutyrate (KMTB), the alpha-ketoacid precursor of methionine in the methionine recycle pathway. Ni-containing acireductone dioxygenase (Ni-ARD) produces methylthiopropionate, carbon monoxide and formate, and does not lie on the methionine recycle pathway. The chain is Acireductone dioxygenase (adi1) from Dictyostelium discoideum (Social amoeba).